A 237-amino-acid chain; its full sequence is MPINPLYLFPNLFTASSIFLGMMSIFYASSYQFVMACWLVVASLILDGLDGRVARLTNTTSKFGIEFDSLADVIAFGVAPSLIAYFYVGYNFGRIGMAVSALFVIFGAIRLARFNISTNTSDPYSFIGIPIPAAAVLVVLCVLLDNKYHFLEGNTEKLFLSFIVLLGVLMVSNIRYPNFKKVKWNLKLFILVLIFLSLVFVRPLEALSVFMGLYLIYGIIRWLFLMVKIIFNKNKSA.

8 consecutive transmembrane segments (helical) span residues 3 to 23 (INPL…LGMM), 25 to 45 (IFYA…ASLI), 73 to 93 (VIAF…YNFG), 95 to 115 (IGMA…ARFN), 124 to 144 (YSFI…CVLL), 150 to 170 (FLEG…GVLM), 184 to 204 (WNLK…VRPL), and 207 to 227 (LSVF…FLMV).

It belongs to the CDP-alcohol phosphatidyltransferase class-I family.

It is found in the cell membrane. It carries out the reaction a CDP-1,2-diacyl-sn-glycerol + L-serine = a 1,2-diacyl-sn-glycero-3-phospho-L-serine + CMP + H(+). This chain is CDP-diacylglycerol--serine O-phosphatidyltransferase (pssA), found in Helicobacter pylori (strain ATCC 700392 / 26695) (Campylobacter pylori).